Reading from the N-terminus, the 400-residue chain is MPLWGLLLALWGCSTFSLPADTAAFRRIFLKKMPSVRESLKERGVDMAQLGAEWSQLTKTLSFGNRTSPVVLTNYLDTQYYGEIGIGTPPQTFKVIFDTGSANLWVPSTKCSPLYTACEIHSLYDSLESSSYVENGTEFTIYYGSGKVKGFLSQDLVTVGGITVTQTFGEVTELPLRPFMLAKFDGVLGMGFPAQAVGGVTPVFDHILAQRVLTEDVFSVYYSRDSKNSHLLGGEIVLGGSDPQYYQENFHYVSISKPGSWQIRMKGVSVRSTTLLCEEGCMVVVDTGASYISGPTSSLRLLMEALGAKELSIDEYVVNCNQMPTLPDISFHLGGKAYTLTSADYVLQDPYNNISCTLALHGMDIPPPTGPVWVLGATFIRKFYTEFDRRNNRIGFALAR.

The first 17 residues, 1 to 17 (MPLWGLLLALWGCSTFS), serve as a signal peptide directing secretion. Positions 18–59 (LPADTAAFRRIFLKKMPSVRESLKERGVDMAQLGAEWSQLTK) are cleaved as a propeptide — activation peptide. The N-linked (GlcNAc...) asparagine glycan is linked to Asn65. The Peptidase A1 domain maps to 80-397 (YYGEIGIGTP…DRRNNRIGFA (318 aa)). Asp98 is an active-site residue. Cys111 and Cys118 are joined by a disulfide. An N-linked (GlcNAc...) asparagine glycan is attached at Asn135. Cys277 and Cys281 are disulfide-bonded. The active site involves Asp286. Cys320 and Cys356 are disulfide-bonded. N-linked (GlcNAc...) asparagine glycosylation is present at Asn353.

This sequence belongs to the peptidase A1 family. Interacts with ATP6AP2. In terms of tissue distribution, kidney.

It localises to the secreted. The protein resides in the membrane. The catalysed reaction is Cleavage of Leu-|-Xaa bond in angiotensinogen to generate angiotensin I.. Its activity is regulated as follows. Interaction with ATP6AP2 results in a 5-fold increased efficiency in angiotensinogen processing. Functionally, renin is a highly specific endopeptidase, whose only known function is to generate angiotensin I from angiotensinogen in the plasma, initiating a cascade of reactions that produce an elevation of blood pressure and increased sodium retention by the kidney. The polypeptide is Renin (REN) (Ovis aries (Sheep)).